A 457-amino-acid chain; its full sequence is Oxysterol-binding protein-related protein 3C (457 aa).

Disordered stretches follow at residues 37–61 (NEGVEVINPEGGKEDAEEEAQKGRW) and 363–393 (QGDLSKAGSEKHSLEERQRAEKRTRETKGQK). Basic and acidic residues-rich tracts occupy residues 47 to 61 (GGKEDAEEEAQKGRW) and 370 to 391 (GSEKHSLEERQRAEKRTRETKG).

This sequence belongs to the OSBP family. In terms of tissue distribution, expressed in roots, leaves, stems and flowers.

Functionally, may be involved in the transport of sterols. In Arabidopsis thaliana (Mouse-ear cress), this protein is Oxysterol-binding protein-related protein 3C (ORP3C).